Here is a 185-residue protein sequence, read N- to C-terminus: Urease accessory protein UreE (185 aa).

A disordered region spans residues 153-185; that stretch reads LRANSAQGHGHSHSHSHDHHGYHHHGDGNWHKH. Basic residues predominate over residues 162–175; the sequence is GHSHSHSHDHHGYH. The span at 176-185 shows a compositional bias: basic and acidic residues; sequence HHGDGNWHKH.

Belongs to the UreE family.

The protein resides in the cytoplasm. Functionally, involved in urease metallocenter assembly. Binds nickel. Probably functions as a nickel donor during metallocenter assembly. This chain is Urease accessory protein UreE, found in Haemophilus influenzae (strain PittGG).